Reading from the N-terminus, the 628-residue chain is Monoterpene synthase like 1, chloroplastic (628 aa).

Mg(2+) contacts are provided by Asp-379, Asp-383, and Asp-531. Positions 379–383 match the DDXXD motif motif; it reads DDIYD.

It belongs to the terpene synthase family. Tpsd subfamily. Mg(2+) is required as a cofactor. Mn(2+) serves as cofactor.

The protein localises to the plastid. It localises to the chloroplast. The protein operates within terpene metabolism; oleoresin biosynthesis. Its pathway is secondary metabolite biosynthesis; terpenoid biosynthesis. Monoterpene synthase (TPS) involved in the biosynthesis of monoterpene natural products included in conifer oleoresin secretions and volatile emissions; these compounds contribute to biotic and abiotic stress defense against herbivores and pathogens. This is Monoterpene synthase like 1, chloroplastic from Pinus banksiana (Jack pine).